A 782-amino-acid polypeptide reads, in one-letter code: Lysosome membrane protein 2-C (782 aa).

Residues 1-7 (MVANNKG) are Cytoplasmic-facing. A helical membrane pass occupies residues 8 to 28 (LLIAGLLLSVIGAALFVISLA). Topologically, residues 29–739 (LLPSVLNVAT…QQFKQIQTVK (711 aa)) are lumenal. N-linked (GlcNAc...) asparagine glycans are attached at residues asparagine 77, asparagine 105, asparagine 191, asparagine 219, asparagine 234, asparagine 243, asparagine 281, asparagine 368, asparagine 387, asparagine 401, asparagine 427, asparagine 432, asparagine 451, asparagine 465, asparagine 501, asparagine 536, asparagine 540, asparagine 595, asparagine 605, asparagine 613, asparagine 646, and asparagine 692. The helical transmembrane segment at 740–760 (IAPVVVVSIFGGILLIAGLVM) threads the bilayer. Residues 761–782 (AINGFRKTFYNNNQYNGYNIIN) lie on the Cytoplasmic side of the membrane. Positions 777 to 781 (GYNII) match the Tyrosine-type lysosomal sorting signal motif.

This sequence belongs to the CD36 family. Heavily glycosylated.

It is found in the lysosome membrane. May act as a lysosomal receptor. May be involved role in macropinocytosis and fluid phase exocytosis. In Dictyostelium discoideum (Social amoeba), this protein is Lysosome membrane protein 2-C (lmpC).